The chain runs to 387 residues: 3-ketoacyl-CoA thiolase (387 aa).

Residue Cys91 is the Acyl-thioester intermediate of the active site. Active-site proton acceptor residues include His343 and Cys373.

It belongs to the thiolase-like superfamily. Thiolase family. As to quaternary structure, heterotetramer of two alpha chains (FadB) and two beta chains (FadA).

It localises to the cytoplasm. It catalyses the reaction an acyl-CoA + acetyl-CoA = a 3-oxoacyl-CoA + CoA. It participates in lipid metabolism; fatty acid beta-oxidation. In terms of biological role, catalyzes the final step of fatty acid oxidation in which acetyl-CoA is released and the CoA ester of a fatty acid two carbons shorter is formed. This Serratia proteamaculans (strain 568) protein is 3-ketoacyl-CoA thiolase.